Consider the following 463-residue polypeptide: Chaperone SurA (463 aa).

The N-terminal stretch at 1–25 (MTRYFSIVLSLLLAVSCVFLPVASA) is a signal peptide. PpiC domains follow at residues 175–277 (GAQY…KLVE) and 291–390 (ATEY…QRLG). The interval 439-463 (ADDHHTPSAAVTPATGAVLPAATKH) is disordered.

It localises to the periplasm. The catalysed reaction is [protein]-peptidylproline (omega=180) = [protein]-peptidylproline (omega=0). Chaperone involved in the correct folding and assembly of outer membrane proteins. Recognizes specific patterns of aromatic residues and the orientation of their side chains, which are found more frequently in integral outer membrane proteins. May act in both early periplasmic and late outer membrane-associated steps of protein maturation. The protein is Chaperone SurA of Xylella fastidiosa (strain Temecula1 / ATCC 700964).